A 310-amino-acid polypeptide reads, in one-letter code: Aspartate carbamoyltransferase catalytic subunit (310 aa).

Residues Arg58 and Thr59 each coordinate carbamoyl phosphate. Lys86 contacts L-aspartate. Carbamoyl phosphate is bound by residues Arg108, His136, and Gln139. The L-aspartate site is built by Arg169 and Arg224. Carbamoyl phosphate is bound by residues Gly265 and Pro266.

Belongs to the aspartate/ornithine carbamoyltransferase superfamily. ATCase family. As to quaternary structure, heterododecamer (2C3:3R2) of six catalytic PyrB chains organized as two trimers (C3), and six regulatory PyrI chains organized as three dimers (R2).

The catalysed reaction is carbamoyl phosphate + L-aspartate = N-carbamoyl-L-aspartate + phosphate + H(+). Its pathway is pyrimidine metabolism; UMP biosynthesis via de novo pathway; (S)-dihydroorotate from bicarbonate: step 2/3. Its function is as follows. Catalyzes the condensation of carbamoyl phosphate and aspartate to form carbamoyl aspartate and inorganic phosphate, the committed step in the de novo pyrimidine nucleotide biosynthesis pathway. In Citrifermentans bemidjiense (strain ATCC BAA-1014 / DSM 16622 / JCM 12645 / Bem) (Geobacter bemidjiensis), this protein is Aspartate carbamoyltransferase catalytic subunit.